A 384-amino-acid chain; its full sequence is Cyanate transport protein CynX (384 aa).

12 helical membrane-spanning segments follow: residues 3-23 (LVLVLIGLNMRPLLTSVGPLL), 34-54 (FSVAALLTALPVVTMGGLALA), 68-88 (VAISLLLIAVGALMRELYPQS), 89-109 (ALLLSSALLGGVGIGIIQAVM), 122-142 (PLVMGLWSAALMGGGGLGAAI), 153-173 (WYQTLAWWALPAVVALFAWWW), 204-224 (YFGLINGGYASLIAWLPAFYI), 235-255 (SLLALMTLGQAAGALLMPAMA), 263-283 (LLMLALVLQLVGFCGFIWLPM), 287-307 (VLWAMVCGLGLGGAFPLCLLL), 322-342 (VAFMQGIGFIIAGLAPWFSGV), and 354-374 (WAFHALCVVGLMIITLRFAPV).

Belongs to the major facilitator superfamily. Cyanate porter (TC 2.A.1.17) family.

Its subcellular location is the cell inner membrane. Functionally, this protein is part of an active transport system that transports exogenous cyanate into E.coli cells. In Escherichia coli (strain K12), this protein is Cyanate transport protein CynX (cynX).